The primary structure comprises 273 residues: Glutamate transport system permease protein GluD (273 aa).

Helical transmembrane passes span 26 to 46, 64 to 84, 100 to 120, 150 to 170, and 200 to 220; these read ILPGLWGTLKSAVFSVILALV, WFCAVIIETFRAIPVLILMIF, LAFAAVVFGLTMYNGSVIAEI, ILLPQAVAAMLPALISQMVIA, and LAALFVVALIMIVLNFSLTAL. Residues 30–221 enclose the ABC transmembrane type-1 domain; it reads LWGTLKSAVF…VLNFSLTALA (192 aa). The segment at 242–273 is disordered; sequence PEQPDQGLETKDNVNVDWQDPDYKDLKTPGVQ. Positions 262–273 are enriched in basic and acidic residues; it reads PDYKDLKTPGVQ.

Belongs to the binding-protein-dependent transport system permease family. HisMQ subfamily. In terms of assembly, the complex is composed of two ATP-binding proteins (GluA), two transmembrane proteins (GluC and GluD) and a solute-binding protein (GluB).

The protein resides in the cell membrane. Its function is as follows. Part of the ABC transporter complex GluABCD involved in glutamate uptake. Probably responsible for the translocation of the substrate across the membrane. This chain is Glutamate transport system permease protein GluD, found in Corynebacterium glutamicum (strain ATCC 13032 / DSM 20300 / JCM 1318 / BCRC 11384 / CCUG 27702 / LMG 3730 / NBRC 12168 / NCIMB 10025 / NRRL B-2784 / 534).